We begin with the raw amino-acid sequence, 134 residues long: Complexin-1 (134 aa).

Disordered regions lie at residues 1–60 and 74–114; these read MEFV…AERE and KKEE…EEDE. Residues 15–60 show a composition bias toward basic and acidic residues; sequence DMGKMLGGDEEKDPDAAKKEEERQEALRQAEEERKAKYAKMEAERE. Residues 29–64 are a coiled coil; the sequence is DAAKKEEERQEALRQAEEERKAKYAKMEAEREVMRQ. Residues 48 to 70 are interaction with the SNARE complex; the sequence is RKAKYAKMEAEREVMRQGIRDKY.

Belongs to the complexin/synaphin family. In terms of assembly, binds to the SNARE core complex containing SNAP25, VAMP2 and STX1A. As to expression, nervous system, and pancreatic islet cells. Present in many brain regions, including hippocampus and cerebellum. In the retina, present at conventional amacrine cell synapses (at protein level).

It is found in the cytoplasm. The protein resides in the cytosol. The protein localises to the perikaryon. It localises to the presynapse. Positively regulates a late step in exocytosis of various cytoplasmic vesicles, such as synaptic vesicles and other secretory vesicles. Organizes the SNAREs into a cross-linked zigzag topology that, when interposed between the vesicle and plasma membranes, is incompatible with fusion, thereby preventing SNAREs from releasing neurotransmitters until an action potential arrives at the synapse. Also involved in glucose-induced secretion of insulin by pancreatic beta-cells. Essential for motor behavior. The chain is Complexin-1 (Cplx1) from Mus musculus (Mouse).